A 415-amino-acid polypeptide reads, in one-letter code: MNVLVIGAGGREHALAYKLNQSNLVKQVFVIPGNEAMTPIAEVHTEISEPDHQAILDFAKRQNVDWVVIGPEQPLIDGLADILRANGFKVFGPNKQAAQIEGSKLFAKKIMEKYNIPTADYKEVERKKDALTYIENCELPVVVKKDGLAAGKGVIIADTIEAARSAIEIMYGDEEEGTVVFETFLEGEEFSLMTFVNGDLAVPFDCIAQDHKRAFDHDEGPNTGGMGAYCPVPHISDDVLKLTNETIAQPIAKAMLNEGYQFFGVLYIGAILTKDGPKVIEFNARFGDPEAQVLLSRMESDLMQHIIDLDEGKRTEFKWKNESIVGVMLASKGYPDAYEKGHKVSGFDLNENYFVSGLKKQGDTFVTSGGRVILAIGKGDNVQDAQRDAYKKVSQIQSDHLFYRHDIANKALQLK.

The ATP-grasp domain maps to K108–E311. I134 to S191 contacts ATP. Mg(2+) is bound by residues E281 and N283.

It belongs to the GARS family. It depends on Mg(2+) as a cofactor. Requires Mn(2+) as cofactor.

It carries out the reaction 5-phospho-beta-D-ribosylamine + glycine + ATP = N(1)-(5-phospho-beta-D-ribosyl)glycinamide + ADP + phosphate + H(+). It functions in the pathway purine metabolism; IMP biosynthesis via de novo pathway; N(1)-(5-phospho-D-ribosyl)glycinamide from 5-phospho-alpha-D-ribose 1-diphosphate: step 2/2. The polypeptide is Phosphoribosylamine--glycine ligase (Staphylococcus aureus (strain COL)).